Consider the following 372-residue polypeptide: Chaperone protein DnaJ (372 aa).

The J domain maps to 5–70 (DYYEVLGVSK…QKRAAYDQYG (66 aa)). The CR-type zinc-finger motif lies at 127 to 205 (GVTKEIRIPT…CHGHGRVERY (79 aa)). Cys140, Cys143, Cys157, Cys160, Cys179, Cys182, Cys193, and Cys196 together coordinate Zn(2+). CXXCXGXG motif repeat units lie at residues 140-147 (CDICHGSG), 157-164 (CSTCQGAG), 179-186 (CPHCHGRG), and 193-200 (CHKCHGHG).

This sequence belongs to the DnaJ family. As to quaternary structure, homodimer. It depends on Zn(2+) as a cofactor.

It localises to the cytoplasm. Its function is as follows. Participates actively in the response to hyperosmotic and heat shock by preventing the aggregation of stress-denatured proteins and by disaggregating proteins, also in an autonomous, DnaK-independent fashion. Unfolded proteins bind initially to DnaJ; upon interaction with the DnaJ-bound protein, DnaK hydrolyzes its bound ATP, resulting in the formation of a stable complex. GrpE releases ADP from DnaK; ATP binding to DnaK triggers the release of the substrate protein, thus completing the reaction cycle. Several rounds of ATP-dependent interactions between DnaJ, DnaK and GrpE are required for fully efficient folding. Also involved, together with DnaK and GrpE, in the DNA replication of plasmids through activation of initiation proteins. The polypeptide is Chaperone protein DnaJ (Photorhabdus laumondii subsp. laumondii (strain DSM 15139 / CIP 105565 / TT01) (Photorhabdus luminescens subsp. laumondii)).